The sequence spans 398 residues: Bone morphogenetic protein 2-B (398 aa).

A signal peptide spans 1–23; the sequence is MVAGIHSLLLLQFYQILLSGCTG. Positions 24–284 are excised as a propeptide; sequence LVPEEGKRKY…GHALHKRQKR (261 aa). N-linked (GlcNAc...) asparagine glycans are attached at residues Asn137, Asn202, Asn237, and Asn340. Disulfide bonds link Cys298–Cys363, Cys327–Cys395, and Cys331–Cys397.

This sequence belongs to the TGF-beta family. As to quaternary structure, homodimer; disulfide-linked.

It is found in the secreted. In terms of biological role, induces cartilage and bone formation. The protein is Bone morphogenetic protein 2-B (bmp2-b) of Xenopus laevis (African clawed frog).